The sequence spans 377 residues: Queuine tRNA-ribosyltransferase (377 aa).

Residue Asp89 is the Proton acceptor of the active site. Residues 89–93 (DSGGF), Asp143, Gln188, and Gly215 contribute to the substrate site. Positions 246 to 252 (GVGKPED) are RNA binding. Asp265 acts as the Nucleophile in catalysis. The RNA binding; important for wobble base 34 recognition stretch occupies residues 270 to 274 (TRNAR). Zn(2+)-binding residues include Cys303, Cys305, Cys308, and His334.

The protein belongs to the queuine tRNA-ribosyltransferase family. As to quaternary structure, homodimer. Within each dimer, one monomer is responsible for RNA recognition and catalysis, while the other monomer binds to the replacement base PreQ1. Zn(2+) serves as cofactor.

It catalyses the reaction 7-aminomethyl-7-carbaguanine + guanosine(34) in tRNA = 7-aminomethyl-7-carbaguanosine(34) in tRNA + guanine. Its pathway is tRNA modification; tRNA-queuosine biosynthesis. Catalyzes the base-exchange of a guanine (G) residue with the queuine precursor 7-aminomethyl-7-deazaguanine (PreQ1) at position 34 (anticodon wobble position) in tRNAs with GU(N) anticodons (tRNA-Asp, -Asn, -His and -Tyr). Catalysis occurs through a double-displacement mechanism. The nucleophile active site attacks the C1' of nucleotide 34 to detach the guanine base from the RNA, forming a covalent enzyme-RNA intermediate. The proton acceptor active site deprotonates the incoming PreQ1, allowing a nucleophilic attack on the C1' of the ribose to form the product. After dissociation, two additional enzymatic reactions on the tRNA convert PreQ1 to queuine (Q), resulting in the hypermodified nucleoside queuosine (7-(((4,5-cis-dihydroxy-2-cyclopenten-1-yl)amino)methyl)-7-deazaguanosine). This Acinetobacter baumannii (strain SDF) protein is Queuine tRNA-ribosyltransferase.